The following is a 331-amino-acid chain: NADH-quinone oxidoreductase subunit H (331 aa).

The next 9 membrane-spanning stretches (helical) occupy residues 6 to 26 (FFIVETIIKAVVILSVIATLA), 45 to 65 (GPWMVGPAGVLQIVADMIKLF), 78 to 98 (FIFLIAPIISASCAFVAMSVI), 120 to 140 (IGILFLLSVSGTCVYGTLIGG), 167 to 187 (GLSLIPVIMMVGSLSLIDIVH), 193 to 213 (ITSWFLIKQPVCFVLFTIAAF), 241 to 261 (MRWGMFFIGEYANMITYSIVI), 263 to 283 (LIFLGGFNSFWFIPGSLMIFL), and 311 to 331 (CWKICMPIALICIFVTAFVII).

This sequence belongs to the complex I subunit 1 family. NDH-1 is composed of 14 different subunits. Subunits NuoA, H, J, K, L, M, N constitute the membrane sector of the complex.

It localises to the cell inner membrane. It catalyses the reaction a quinone + NADH + 5 H(+)(in) = a quinol + NAD(+) + 4 H(+)(out). Functionally, NDH-1 shuttles electrons from NADH, via FMN and iron-sulfur (Fe-S) centers, to quinones in the respiratory chain. The immediate electron acceptor for the enzyme in this species is believed to be ubiquinone. Couples the redox reaction to proton translocation (for every two electrons transferred, four hydrogen ions are translocated across the cytoplasmic membrane), and thus conserves the redox energy in a proton gradient. This subunit may bind ubiquinone. In Campylobacter hominis (strain ATCC BAA-381 / DSM 21671 / CCUG 45161 / LMG 19568 / NCTC 13146 / CH001A), this protein is NADH-quinone oxidoreductase subunit H.